A 361-amino-acid chain; its full sequence is Velvet complex subunit B (361 aa).

2 disordered regions span residues 1–36 and 308–340; these read MYAVEDRHHPVPPPLSMDRISAPSVQYPSGTTSLRQ and NGAPVIEPHQSWPRFSLNPSRSSPPKSSPVLLR. Polar residues predominate over residues 23–35; it reads PSVQYPSGTTSLR. The 307-residue stretch at 47–353 folds into the Velvet domain; sequence QDGRSWSLQV…SASALRYRVS (307 aa). A compositionally biased stretch (low complexity) spans 323–336; sequence SLNPSRSSPPKSSP.

Belongs to the velvet family. VelB subfamily. Component of the heterotrimeric velvet complex composed of laeA, veA and velB; VeA acting as a bridging protein between laeA and velB. Interacts with velA. Forms a heterodimeric complex with vosA; the formation of the velB-vosA complex is light-dependent. Interacts with vosA.

The protein resides in the nucleus. It is found in the cytoplasm. Functionally, component of the velvet transcription factor complex that controls sexual/asexual developmental ratio in response to light, promoting sexual development in the darkness while stimulating asexual sporulation under illumination. The velvet complex acts as a global regulator for secondary metabolite gene expression. Component of the velB-VosA heterodimeric complex that plays a dual role in activating genes associated with spore maturation and repressing certain development-associated genes. The velB-VosA complex binds DNA through the DNA-binding domain of vosA that recognizes an 11-nucleotide consensus sequence 5'-CTGGCCGCGGC-3' consisting of two motifs in the promoters of key developmental regulatory genes. Controls conidiophore formation. The polypeptide is Velvet complex subunit B (Penicillium rubens (strain ATCC 28089 / DSM 1075 / NRRL 1951 / Wisconsin 54-1255) (Penicillium chrysogenum)).